A 430-amino-acid chain; its full sequence is Tol-Pal system protein TolB (430 aa).

The signal sequence occupies residues 1 to 21; the sequence is MKQAFRLMVGLLVLWASVLHA.

The protein belongs to the TolB family. The Tol-Pal system is composed of five core proteins: the inner membrane proteins TolA, TolQ and TolR, the periplasmic protein TolB and the outer membrane protein Pal. They form a network linking the inner and outer membranes and the peptidoglycan layer.

The protein localises to the periplasm. Its function is as follows. Part of the Tol-Pal system, which plays a role in outer membrane invagination during cell division and is important for maintaining outer membrane integrity. TolB occupies a key intermediary position in the Tol-Pal system because it communicates directly with both membrane-embedded components, Pal in the outer membrane and TolA in the inner membrane. This Edwardsiella ictaluri (strain 93-146) protein is Tol-Pal system protein TolB.